The following is a 365-amino-acid chain: Glutamate 5-kinase 1 (365 aa).

Lys9 lines the ATP pocket. The substrate site is built by Ser49, Asp136, and Asn148. Residues 168–169 and 210–216 contribute to the ATP site; these read TD and TGGMKSK. In terms of domain architecture, PUA spans 276–353; that stretch reads SGKITVDEGA…DEFHHEEGIE (78 aa).

This sequence belongs to the glutamate 5-kinase family.

Its subcellular location is the cytoplasm. It carries out the reaction L-glutamate + ATP = L-glutamyl 5-phosphate + ADP. It participates in amino-acid biosynthesis; L-proline biosynthesis; L-glutamate 5-semialdehyde from L-glutamate: step 1/2. Catalyzes the transfer of a phosphate group to glutamate to form L-glutamate 5-phosphate. The sequence is that of Glutamate 5-kinase 1 from Bacillus licheniformis (strain ATCC 14580 / DSM 13 / JCM 2505 / CCUG 7422 / NBRC 12200 / NCIMB 9375 / NCTC 10341 / NRRL NRS-1264 / Gibson 46).